Reading from the N-terminus, the 115-residue chain is Small polypeptide DEVIL 13 (115 aa).

A compositionally biased stretch (basic and acidic residues) spans 1 to 12 (MEEKWKLSKKDT). Residues 1 to 89 (MEEKWKLSKK…SITQKYSSLA (89 aa)) form a disordered region. The span at 13–65 (TASSSSSKSKFSRSFSTSASSTKSPIFVRSSSTKCSVPSSSSSSSSSSSISRS) shows a compositional bias: low complexity. The helical transmembrane segment at 44–63 (STKCSVPSSSSSSSSSSSIS) threads the bilayer. The segment at 80–111 (SITQKYSSLAKEQKARFYIMRRCVAMLVCWHK) is required for DVL/RTFL small polypeptide activity.

It belongs to the DVL/RTFL small polypeptides family.

The protein localises to the cell membrane. Small polypeptide acting as a regulatory molecule which coordinates cellular responses required for differentiation, growth and development, probably by restricting polar cell proliferation in lateral organs and coordinating socket cell recruitment and differentiation at trichome sites. The sequence is that of Small polypeptide DEVIL 13 from Arabidopsis thaliana (Mouse-ear cress).